The primary structure comprises 216 residues: Somatotropin (216 aa).

An N-terminal signal peptide occupies residues 1 to 26 (MAAGPRNSMLLVFALLSLPWPQEVGA). Histidine 45 lines the Zn(2+) pocket. Cysteine 78 and cysteine 189 form a disulfide bridge. Serine 131 carries the phosphoserine modification. Position 198 (glutamate 198) interacts with Zn(2+). A disulfide bond links cysteine 206 and cysteine 214.

It belongs to the somatotropin/prolactin family.

It is found in the secreted. Its function is as follows. Plays an important role in growth control. Its major role in stimulating body growth is to stimulate the liver and other tissues to secrete IGF1. It stimulates both the differentiation and proliferation of myoblasts. It also stimulates amino acid uptake and protein synthesis in muscle and other tissues. The polypeptide is Somatotropin (GH1) (Neovison vison (American mink)).